The primary structure comprises 143 residues: Nucleoside diphosphate kinase (143 aa).

ATP contacts are provided by lysine 11, phenylalanine 59, arginine 87, threonine 93, arginine 104, and asparagine 114. The active-site Pros-phosphohistidine intermediate is histidine 117.

Belongs to the NDK family. As to quaternary structure, homotetramer. Mg(2+) is required as a cofactor.

The protein resides in the cytoplasm. The enzyme catalyses a 2'-deoxyribonucleoside 5'-diphosphate + ATP = a 2'-deoxyribonucleoside 5'-triphosphate + ADP. It carries out the reaction a ribonucleoside 5'-diphosphate + ATP = a ribonucleoside 5'-triphosphate + ADP. In terms of biological role, major role in the synthesis of nucleoside triphosphates other than ATP. The ATP gamma phosphate is transferred to the NDP beta phosphate via a ping-pong mechanism, using a phosphorylated active-site intermediate. The chain is Nucleoside diphosphate kinase from Shewanella piezotolerans (strain WP3 / JCM 13877).